The sequence spans 149 residues: Oocyte-expressed protein (149 aa).

Residues 49–110 form the KH; atypical domain; that stretch reads PLVFYLEAWL…RVQNRVKSVL (62 aa).

This sequence belongs to the KHDC1 family. Component of the subcortical maternal complex (SCMC), at least composed of NLRP5, KHDC3, OOEP, and TLE6. Within the complex, interacts with NLRP5, KHDC3 and TLE6. As part of the SCMC interacts with the SCMC-associated protein NLRP4F. The SCMC may facilitate translocation of its components between the nuclear and cytoplasmic compartments. Forms a scaffold complex with KHDC3/FILIA, and interacts with BLM and TRIM25 at DNA replication forks.

Its subcellular location is the cytoplasm. It is found in the nucleus. Component of the subcortical maternal complex (SCMC), a multiprotein complex that plays a key role in early embryonic development. The SCMC complex is a structural constituent of cytoplasmic lattices, which consist in fibrous structures found in the cytoplasm of oocytes and preimplantation embryos. They are required to store maternal proteins critical for embryonic development, such as proteins that control epigenetic reprogramming of the preimplantation embryo, and prevent their degradation or activation. As part of the OOEP-KHDC3 scaffold, recruits BLM and TRIM25 to DNA replication forks, thereby promoting the ubiquitination of BLM by TRIM25, enhancing BLM retainment at replication forks and therefore promoting stalled replication fork restart. Positively regulates the homologous recombination-mediated DNA double-strand break (DSB) repair pathway by regulating ATM activation and RAD51 recruitment to DSBs in oocytes. Thereby contributes to oocyte survival and the resumption and completion of meiosis. This chain is Oocyte-expressed protein (OOEP), found in Canis lupus familiaris (Dog).